The primary structure comprises 103 residues: Large ribosomal subunit protein bL21 (103 aa).

Belongs to the bacterial ribosomal protein bL21 family. As to quaternary structure, part of the 50S ribosomal subunit. Contacts protein L20.

In terms of biological role, this protein binds to 23S rRNA in the presence of protein L20. The polypeptide is Large ribosomal subunit protein bL21 (Vibrio atlanticus (strain LGP32) (Vibrio splendidus (strain Mel32))).